The following is a 409-amino-acid chain: FADH(2)-dependent resorcinol hydroxylase, oxygenase component (409 aa).

Belongs to the HpaH/HsaA monooxygenase family. The FADH(2)-dependent resorcinol hydroxylase is composed of two subunits, GraA (the oxygenase component) and GraD (the reductase component). Both subunits are required for activity.

The enzyme catalyses resorcinol + FADH2 + O2 = benzene-1,2,4-triol + FAD + H2O + H(+). It functions in the pathway aromatic compound metabolism. Involved in the gamma-resorcylate (2,6-dihydroxybenzoate) catabolism. Oxygenase component of the resorcinol hydroxylase, which catalyzes the FADH(2)-dependent conversion of resorcinol to hydroxyquinol. The polypeptide is FADH(2)-dependent resorcinol hydroxylase, oxygenase component (Rhizobium sp. (strain MTP-10005)).